A 467-amino-acid polypeptide reads, in one-letter code: Argininosuccinate lyase (467 aa).

The protein belongs to the lyase 1 family. Argininosuccinate lyase subfamily.

The protein localises to the cytoplasm. The catalysed reaction is 2-(N(omega)-L-arginino)succinate = fumarate + L-arginine. It functions in the pathway amino-acid biosynthesis; L-arginine biosynthesis; L-arginine from L-ornithine and carbamoyl phosphate: step 3/3. In Allorhizobium ampelinum (strain ATCC BAA-846 / DSM 112012 / S4) (Agrobacterium vitis (strain S4)), this protein is Argininosuccinate lyase.